We begin with the raw amino-acid sequence, 226 residues long: Biosynthetic peptidoglycan transglycosylase (226 aa).

Residues 7-29 (VMALSAIGLLLLPYLLTPLYRIG) traverse the membrane as a helical segment.

This sequence belongs to the glycosyltransferase 51 family.

The protein localises to the cell inner membrane. It carries out the reaction [GlcNAc-(1-&gt;4)-Mur2Ac(oyl-L-Ala-gamma-D-Glu-L-Lys-D-Ala-D-Ala)](n)-di-trans,octa-cis-undecaprenyl diphosphate + beta-D-GlcNAc-(1-&gt;4)-Mur2Ac(oyl-L-Ala-gamma-D-Glu-L-Lys-D-Ala-D-Ala)-di-trans,octa-cis-undecaprenyl diphosphate = [GlcNAc-(1-&gt;4)-Mur2Ac(oyl-L-Ala-gamma-D-Glu-L-Lys-D-Ala-D-Ala)](n+1)-di-trans,octa-cis-undecaprenyl diphosphate + di-trans,octa-cis-undecaprenyl diphosphate + H(+). Its pathway is cell wall biogenesis; peptidoglycan biosynthesis. Peptidoglycan polymerase that catalyzes glycan chain elongation from lipid-linked precursors. The chain is Biosynthetic peptidoglycan transglycosylase from Nitrobacter winogradskyi (strain ATCC 25391 / DSM 10237 / CIP 104748 / NCIMB 11846 / Nb-255).